A 380-amino-acid polypeptide reads, in one-letter code: Variant-surface-glycoprotein phospholipase C (380 aa).

The PI-PLC X-box domain occupies 31–205 (ITQVCFVGSH…SRRRIFLVVG (175 aa)).

Monomer.

It localises to the membrane. The catalysed reaction is a 6-(alpha-D-glucosaminyl)-1-(1,2-diacyl-sn-glycero-3-phospho)-1D-myo-inositol = 6-(alpha-D-glucosaminyl)-1D-myo-inositol 1,2-cyclic phosphate + a 1,2-diacyl-sn-glycerol. Its function is as follows. By hydrolysis of the attached glycolipid, releases soluble variant surface glycoprotein containing phosphoinositol from the cell wall of T.brucei after cell lysis. It also cleaves similar membrane anchors on some mammalian proteins. VSG lipase may play a role in processes such as parasite differentiation or antigenic variation. The sequence is that of Variant-surface-glycoprotein phospholipase C from Trypanosoma cruzi.